A 1220-amino-acid chain; its full sequence is DNA-directed RNA polymerase subunit beta' (1220 aa).

The Zn(2+) site is built by cysteine 60, cysteine 62, cysteine 75, and cysteine 78. Mg(2+) contacts are provided by aspartate 449, aspartate 451, and aspartate 453. Residues cysteine 818, cysteine 892, cysteine 899, and cysteine 902 each contribute to the Zn(2+) site.

Belongs to the RNA polymerase beta' chain family. The RNAP catalytic core consists of 2 alpha, 1 beta, 1 beta' and 1 omega subunit. When a sigma factor is associated with the core the holoenzyme is formed, which can initiate transcription. Mg(2+) serves as cofactor. The cofactor is Zn(2+).

It catalyses the reaction RNA(n) + a ribonucleoside 5'-triphosphate = RNA(n+1) + diphosphate. Its function is as follows. DNA-dependent RNA polymerase catalyzes the transcription of DNA into RNA using the four ribonucleoside triphosphates as substrates. The polypeptide is DNA-directed RNA polymerase subunit beta' (Lacticaseibacillus paracasei (strain ATCC 334 / BCRC 17002 / CCUG 31169 / CIP 107868 / KCTC 3260 / NRRL B-441) (Lactobacillus paracasei)).